The primary structure comprises 179 residues: Translation initiation factor IF-3 (179 aa).

This sequence belongs to the IF-3 family. In terms of assembly, monomer.

It localises to the cytoplasm. Functionally, IF-3 binds to the 30S ribosomal subunit and shifts the equilibrium between 70S ribosomes and their 50S and 30S subunits in favor of the free subunits, thus enhancing the availability of 30S subunits on which protein synthesis initiation begins. This Buchnera aphidicola subsp. Acyrthosiphon pisum (strain APS) (Acyrthosiphon pisum symbiotic bacterium) protein is Translation initiation factor IF-3.